The sequence spans 116 residues: Signal recognition particle 14 kDa protein (116 aa).

It belongs to the SRP14 family. In terms of assembly, heterodimer with ZK512.4/SRP9; binds RNA as heterodimer. Component of a signal recognition particle (SRP) complex that consists of a 7SL RNA molecule of 300 nucleotides and six protein subunits: srpa-72, srpa-68, SRP54, F37F2.2/SRP19, F25G6.8/SRP14 and ZK512.4/SRP9.

It is found in the cytoplasm. Functionally, component of the signal recognition particle (SRP) complex, a ribonucleoprotein complex that mediates the cotranslational targeting of secretory and membrane proteins to the endoplasmic reticulum (ER). F37F2.2/srpa-19 together with F25G6.8/srpa-14 and the Alu portion of the SRP RNA, constitutes the elongation arrest domain of SRP. The complex of F37F2.2/srpa-19 and F25G6.8/srpa-14 is required for SRP RNA binding. The sequence is that of Signal recognition particle 14 kDa protein from Caenorhabditis elegans.